The primary structure comprises 339 residues: Protoheme IX farnesyltransferase (339 aa).

The disordered stretch occupies residues 1–27 (MTVADPRLTDAPAHSRTSLLGRRRGGR). A run of 9 helical transmembrane segments spans residues 45–65 (IVELLLITTIPVMLFAAGGLP), 67–87 (GWLILTTFVGGALAAGCANTL), 117–136 (ALVFATVLGIASTAIFVAFV), 140–159 (SAALALGAILLYVVGYTLLL), 165–185 (QNIVWGGVAGCMQVLIGWTAV), 191–211 (WAPFVLFGVIFLWTPPHYWPL), 236–256 (VSRQIVLYTIAMVLCSLLLVP), 257–277 (LGGAGVVYGAAALVLGIGFLV), and 309–329 (PMGVFHGSITYLTLLSAAVAV).

It belongs to the UbiA prenyltransferase family. Protoheme IX farnesyltransferase subfamily.

The protein resides in the cell membrane. The enzyme catalyses heme b + (2E,6E)-farnesyl diphosphate + H2O = Fe(II)-heme o + diphosphate. It participates in porphyrin-containing compound metabolism; heme O biosynthesis; heme O from protoheme: step 1/1. Converts heme B (protoheme IX) to heme O by substitution of the vinyl group on carbon 2 of heme B porphyrin ring with a hydroxyethyl farnesyl side group. The polypeptide is Protoheme IX farnesyltransferase (Kineococcus radiotolerans (strain ATCC BAA-149 / DSM 14245 / SRS30216)).